The following is a 358-amino-acid chain: MSDIETFYDVMRRQGITRRSFMKSVRSPQHVLGLGPSFVPKIGEAMETKPRTPVVWVHGLECTCCSESFIRSAHPLAKDVVLSMISLDYDDTLMAAAGHAAEAAFEETIAKYKGNYILAVEGNPPLNEDGMFCITGGKPFVEKLRHAAEGAKAIISWGACASYGCVQAAAPNPTQATPVHKVITDKPIIKVPGCPPIAEVMTGVITYMLTFDRMPELDRQGRPAMFYSQRIHDKCYRRPHFDAGQFVEHWDDENARKGYCLYKMGCKGPTTYNACSTVPLERRRHFPIQSGHGCIGCSEDGFWDQGSFYDRLTTIKQFGIEATADQIGWTATGLVGAAVAAHAAVSVLKRAQKKNEEA.

Positions 1-45 (MSDIETFYDVMRRQGITRRSFMKSVRSPQHVLGLGPSFVPKIGEA) are cleaved as a signal peptide. [4Fe-4S] cluster-binding residues include Cys-62, Cys-65, Cys-160, Cys-194, His-232, Cys-235, Cys-260, and Cys-266. Residues Cys-275, Cys-294, and Cys-297 each contribute to the [3Fe-4S] cluster site.

Belongs to the [NiFe]/[NiFeSe] hydrogenase small subunit family. Heterodimer of a large and a small subunit. The cofactor is [4Fe-4S] cluster. [3Fe-4S] cluster serves as cofactor.

It localises to the cell membrane. It catalyses the reaction H2 + A = AH2. Its function is as follows. This enzyme recycles the H(2) produced by nitrogenase to increase the production of ATP and to protect nitrogenase against inhibition or damage by O(2) under carbon- or phosphate-limited conditions. This Rhodobacter capsulatus (Rhodopseudomonas capsulata) protein is Uptake hydrogenase small subunit (hupA).